We begin with the raw amino-acid sequence, 208 residues long: NAD(P)H-quinone oxidoreductase subunit I (208 aa).

2 consecutive 4Fe-4S ferredoxin-type domains span residues 55-84 (GRIHYEFDKCIACEVCVRVCPINLPVVDWV) and 95-124 (RNYSIDFGVCIFCGNCVEYCPTNCLSMTEE). [4Fe-4S] cluster contacts are provided by Cys64, Cys67, Cys70, Cys74, Cys104, Cys107, Cys110, and Cys114.

It belongs to the complex I 23 kDa subunit family. As to quaternary structure, NDH-1 is composed of at least 11 different subunits. It depends on [4Fe-4S] cluster as a cofactor.

The protein resides in the cellular thylakoid membrane. It carries out the reaction a plastoquinone + NADH + (n+1) H(+)(in) = a plastoquinol + NAD(+) + n H(+)(out). The catalysed reaction is a plastoquinone + NADPH + (n+1) H(+)(in) = a plastoquinol + NADP(+) + n H(+)(out). Its function is as follows. NDH-1 shuttles electrons from an unknown electron donor, via FMN and iron-sulfur (Fe-S) centers, to quinones in the respiratory and/or the photosynthetic chain. The immediate electron acceptor for the enzyme in this species is believed to be plastoquinone. Couples the redox reaction to proton translocation, and thus conserves the redox energy in a proton gradient. The polypeptide is NAD(P)H-quinone oxidoreductase subunit I (Prochlorococcus marinus (strain MIT 9312)).